Reading from the N-terminus, the 122-residue chain is Biogenesis of lysosome-related organelles complex 1 subunit BLS1 (122 aa).

The residue at position 33 (S33) is a Phosphoserine.

It belongs to the BLOC1S1 family. Component of the biogenesis of lysosome-related organelles complex-1 (BLOC-1) composed of at least BLI1, BLS1, CNL1, KXD1, SNN1 and VAB2.

The protein resides in the endosome. Functionally, component of the biogenesis of lysosome-related organelles complex-1 (BLOC-1), a complex involved in endosomal cargo sorting. In Saccharomyces cerevisiae (strain RM11-1a) (Baker's yeast), this protein is Biogenesis of lysosome-related organelles complex 1 subunit BLS1 (BLS1).